A 240-amino-acid polypeptide reads, in one-letter code: MSIAKGKNALLVASSYYGPFYPDGKNTGVHFSELLIPYNVFKKAGFNVQFVSENGSYKFDDHSIEESKLGDFERKVFNDKNDDFWTNLNNMKKASDIVGKDYQLLFVAGGHAAMFDLPKATNLQAVAREVFTNGGVLSAVCHGPVLLANVKNPQSVEGKTVVYHKHVTAFNKAGEEKMGVMDELKKRGMKSLNEIFAEAGATFIDPPNPNVNFTQIDGKIVTGVNPQSAKSTAEAAVSAL.

Active-site residues include Cys141, His142, and Glu175.

It belongs to the peptidase C56 family. HSP31-like subfamily.

The protein localises to the cytoplasm. The protein resides in the nucleus. The catalysed reaction is methylglyoxal + H2O = (R)-lactate + H(+). Catalyzes the conversion of methylglyoxal (MG) to D-lactate in a single glutathione (GSH)-independent step. May play a role in detoxifying endogenously produced glyoxals. Involved in protection against reactive oxygen species (ROS). This Schizosaccharomyces pombe (strain 972 / ATCC 24843) (Fission yeast) protein is Glutathione-independent glyoxalase hsp3102.